We begin with the raw amino-acid sequence, 209 residues long: Ribosomal RNA large subunit methyltransferase E (209 aa).

S-adenosyl-L-methionine-binding residues include Gly63, Trp65, Asp83, Asp99, and Asp124. Lys164 functions as the Proton acceptor in the catalytic mechanism.

It belongs to the class I-like SAM-binding methyltransferase superfamily. RNA methyltransferase RlmE family.

Its subcellular location is the cytoplasm. The enzyme catalyses uridine(2552) in 23S rRNA + S-adenosyl-L-methionine = 2'-O-methyluridine(2552) in 23S rRNA + S-adenosyl-L-homocysteine + H(+). Its function is as follows. Specifically methylates the uridine in position 2552 of 23S rRNA at the 2'-O position of the ribose in the fully assembled 50S ribosomal subunit. In Shewanella baltica (strain OS223), this protein is Ribosomal RNA large subunit methyltransferase E.